The chain runs to 377 residues: Actin-related protein T2 (377 aa).

The protein belongs to the actin family.

It localises to the cytoplasm. The protein localises to the cytoskeleton. The protein is Actin-related protein T2 (Actrt2) of Mus musculus (Mouse).